Reading from the N-terminus, the 731-residue chain is Inclusion body clearance protein IML2 (731 aa).

Positions 1 to 26 (MFRVFGSFGSKGNQSSGEEQSTKTKQ) are disordered. Polar residues predominate over residues 10–26 (SKGNQSSGEEQSTKTKQ). 3 positions are modified to phosphoserine: serine 265, serine 268, and serine 378. At threonine 380 the chain carries Phosphothreonine. Phosphoserine is present on residues serine 383 and serine 392.

This sequence belongs to the IML2 family. As to quaternary structure, interacts with lipid droplet proteins PET10 and PDR16.

The protein localises to the cytoplasm. It is found in the nucleus. Its function is as follows. Inclusion body (IB) resident protein that interacts strongly with lipid droplet (LD) proteins. Involved in LD-mediated IB clearing after protein folding stress, probably by enabling access to the IBs of an LD-stored soluble sterol derivative that acts as a chaperone in inclusion clearing. The chain is Inclusion body clearance protein IML2 from Saccharomyces cerevisiae (strain ATCC 204508 / S288c) (Baker's yeast).